Reading from the N-terminus, the 145-residue chain is D-aminoacyl-tRNA deacylase (145 aa).

The short motif at 137–138 (GP) is the Gly-cisPro motif, important for rejection of L-amino acids element.

This sequence belongs to the DTD family. As to quaternary structure, homodimer.

It localises to the cytoplasm. The enzyme catalyses glycyl-tRNA(Ala) + H2O = tRNA(Ala) + glycine + H(+). The catalysed reaction is a D-aminoacyl-tRNA + H2O = a tRNA + a D-alpha-amino acid + H(+). Functionally, an aminoacyl-tRNA editing enzyme that deacylates mischarged D-aminoacyl-tRNAs. Also deacylates mischarged glycyl-tRNA(Ala), protecting cells against glycine mischarging by AlaRS. Acts via tRNA-based rather than protein-based catalysis; rejects L-amino acids rather than detecting D-amino acids in the active site. By recycling D-aminoacyl-tRNA to D-amino acids and free tRNA molecules, this enzyme counteracts the toxicity associated with the formation of D-aminoacyl-tRNA entities in vivo and helps enforce protein L-homochirality. This Deinococcus radiodurans (strain ATCC 13939 / DSM 20539 / JCM 16871 / CCUG 27074 / LMG 4051 / NBRC 15346 / NCIMB 9279 / VKM B-1422 / R1) protein is D-aminoacyl-tRNA deacylase.